The sequence spans 309 residues: Aspartate carbamoyltransferase catalytic subunit (309 aa).

Residues Arg-48 and Thr-49 each coordinate carbamoyl phosphate. Lys-76 contributes to the L-aspartate binding site. The carbamoyl phosphate site is built by Arg-98, His-128, and Gln-131. L-aspartate contacts are provided by Arg-161 and Arg-211. Positions 250 and 251 each coordinate carbamoyl phosphate.

It belongs to the aspartate/ornithine carbamoyltransferase superfamily. ATCase family. As to quaternary structure, heterododecamer (2C3:3R2) of six catalytic PyrB chains organized as two trimers (C3), and six regulatory PyrI chains organized as three dimers (R2).

It catalyses the reaction carbamoyl phosphate + L-aspartate = N-carbamoyl-L-aspartate + phosphate + H(+). It participates in pyrimidine metabolism; UMP biosynthesis via de novo pathway; (S)-dihydroorotate from bicarbonate: step 2/3. Functionally, catalyzes the condensation of carbamoyl phosphate and aspartate to form carbamoyl aspartate and inorganic phosphate, the committed step in the de novo pyrimidine nucleotide biosynthesis pathway. This Oceanobacillus iheyensis (strain DSM 14371 / CIP 107618 / JCM 11309 / KCTC 3954 / HTE831) protein is Aspartate carbamoyltransferase catalytic subunit.